The chain runs to 323 residues: Peroxidase 16 (323 aa).

The N-terminal stretch at 1-23 (MKNQSSFSIVALLLIFFSSSVFA) is a signal peptide. 4 disulfide bridges follow: C34-C113, C67-C72, C119-C319, and C198-C230. H65 (proton acceptor) is an active-site residue. The Ca(2+) site is built by D66, V69, G71, D73, and S75. P161 provides a ligand contact to substrate. Heme b is bound at residue H191. T192 is a binding site for Ca(2+). Residues D243, S246, and D251 each coordinate Ca(2+).

Belongs to the peroxidase family. Classical plant (class III) peroxidase subfamily. Requires heme b as cofactor. Ca(2+) is required as a cofactor. As to expression, expressed in the whole plant, but preferentially in roots and leaves.

It is found in the secreted. It catalyses the reaction 2 a phenolic donor + H2O2 = 2 a phenolic radical donor + 2 H2O. Functionally, removal of H(2)O(2), oxidation of toxic reductants, biosynthesis and degradation of lignin, suberization, auxin catabolism, response to environmental stresses such as wounding, pathogen attack and oxidative stress. These functions might be dependent on each isozyme/isoform in each plant tissue. This chain is Peroxidase 16 (PER16), found in Arabidopsis thaliana (Mouse-ear cress).